Consider the following 241-residue polypeptide: Small ribosomal subunit protein uS3 (241 aa).

The 69-residue stretch at 39–107 (IREVLMKNLK…EVVINIVEVR (69 aa)) folds into the KH type-2 domain. The interval 219–241 (MAELDHAGGGGGGERRRRERDAA) is disordered. The span at 231–241 (GERRRRERDAA) shows a compositional bias: basic and acidic residues.

It belongs to the universal ribosomal protein uS3 family. In terms of assembly, part of the 30S ribosomal subunit. Forms a tight complex with proteins S10 and S14.

Functionally, binds the lower part of the 30S subunit head. Binds mRNA in the 70S ribosome, positioning it for translation. This chain is Small ribosomal subunit protein uS3, found in Beijerinckia indica subsp. indica (strain ATCC 9039 / DSM 1715 / NCIMB 8712).